The sequence spans 63 residues: Parvalbumin alpha (63 aa).

EF-hand domains are found at residues 28 to 38 (IEEEELGLILK) and 39 to 63 (VLLAAGDKDGDGKIGVDEFVTLVSE). Ca(2+)-binding residues include E29, E32, D45, D47, D49, K51, and E56.

Detected in muscle and cutaneous mucus. In the skin, detected in cells in the basal region of the glandular epithelium of the dermal mucus glands (at protein level).

It localises to the cytoplasm. It is found in the secreted. Its function is as follows. In muscle, parvalbumin is thought to be involved in relaxation after contraction. It binds two calcium ions. The sequence is that of Parvalbumin alpha from Rana temporaria (European common frog).